Reading from the N-terminus, the 309-residue chain is Putative S-adenosyl-L-methionine-dependent methyltransferase Mflv_0743 (309 aa).

S-adenosyl-L-methionine contacts are provided by residues aspartate 134 and aspartate 163 to leucine 164.

This sequence belongs to the UPF0677 family.

Its function is as follows. Exhibits S-adenosyl-L-methionine-dependent methyltransferase activity. This Mycolicibacterium gilvum (strain PYR-GCK) (Mycobacterium gilvum (strain PYR-GCK)) protein is Putative S-adenosyl-L-methionine-dependent methyltransferase Mflv_0743.